The chain runs to 218 residues: N-(5'-phosphoribosyl)anthranilate isomerase (218 aa).

The protein belongs to the TrpF family.

The catalysed reaction is N-(5-phospho-beta-D-ribosyl)anthranilate = 1-(2-carboxyphenylamino)-1-deoxy-D-ribulose 5-phosphate. It functions in the pathway amino-acid biosynthesis; L-tryptophan biosynthesis; L-tryptophan from chorismate: step 3/5. This chain is N-(5'-phosphoribosyl)anthranilate isomerase, found in Acetivibrio thermocellus (strain ATCC 27405 / DSM 1237 / JCM 9322 / NBRC 103400 / NCIMB 10682 / NRRL B-4536 / VPI 7372) (Clostridium thermocellum).